The following is an 826-amino-acid chain: Hyaluronate lyase HylA (826 aa).

Positions 1–36 (MFDIPYQVPSRRTFLSLSALSAIAIAASPEMPDAFA) form a signal peptide, tat-type signal. Residues His-276, Tyr-285, and Arg-339 contribute to the active site. A disordered region spans residues 800 to 826 (LSPALPKPTKPSLRASSYPLGLPHTSS).

Belongs to the polysaccharide lyase 8 family. In terms of processing, predicted to be exported by the Tat system. The position of the signal peptide cleavage has not been experimentally proven.

It is found in the secreted. It carries out the reaction [hyaluronan](n) = n 3-(4-deoxy-beta-D-gluc-4-enuronosyl)-N-acetyl-D-glucosamine + H2O. Its function is as follows. Degrades hyaluronic acid (HA) into large-sized HA oligosaccharides, including tetrasaccharide HA (HA-4), hexasaccharide HA (HA-6) and higher molecular weight HA, and to a lesser extent into HA disaccharides (HA-2). Involved in the pathogenesis of acne. HA degradation products induce secretion of proinflammatory cytokines (IL-6, IL-8 and TNF-alpha) from human HaCaT keratinocyte cell line and from mouse bone marrow derived macrophages (BMDMs). Produced HA fragments also direct robust TLR2-dependent inflammation in the mouse model of acne. The chain is Hyaluronate lyase HylA from Cutibacterium acnes (Propionibacterium acnes).